Reading from the N-terminus, the 188-residue chain is ATP-dependent Clp protease proteolytic subunit 1 (188 aa).

The Nucleophile role is filled by Ser-90. His-115 is an active-site residue.

This sequence belongs to the peptidase S14 family. In terms of assembly, fourteen ClpP subunits assemble into 2 heptameric rings which stack back to back to give a disk-like structure with a central cavity, resembling the structure of eukaryotic proteasomes.

It localises to the cytoplasm. It catalyses the reaction Hydrolysis of proteins to small peptides in the presence of ATP and magnesium. alpha-casein is the usual test substrate. In the absence of ATP, only oligopeptides shorter than five residues are hydrolyzed (such as succinyl-Leu-Tyr-|-NHMec, and Leu-Tyr-Leu-|-Tyr-Trp, in which cleavage of the -Tyr-|-Leu- and -Tyr-|-Trp bonds also occurs).. Cleaves peptides in various proteins in a process that requires ATP hydrolysis. Has a chymotrypsin-like activity. Plays a major role in the degradation of misfolded proteins. The sequence is that of ATP-dependent Clp protease proteolytic subunit 1 from Corynebacterium jeikeium (strain K411).